The chain runs to 89 residues: Small ribosomal subunit protein uS15 (89 aa).

Positions Met-1 to His-18 are enriched in basic and acidic residues. Residues Met-1–Gly-23 form a disordered region.

This sequence belongs to the universal ribosomal protein uS15 family. Part of the 30S ribosomal subunit. Forms a bridge to the 50S subunit in the 70S ribosome, contacting the 23S rRNA.

Functionally, one of the primary rRNA binding proteins, it binds directly to 16S rRNA where it helps nucleate assembly of the platform of the 30S subunit by binding and bridging several RNA helices of the 16S rRNA. Forms an intersubunit bridge (bridge B4) with the 23S rRNA of the 50S subunit in the ribosome. This chain is Small ribosomal subunit protein uS15, found in Prochlorococcus marinus (strain AS9601).